Here is a 74-residue protein sequence, read N- to C-terminus: Mitochondrial import receptor subunit TOM6 homolog (74 aa).

Residues methionine 1–valine 20 show a composition bias toward low complexity. The disordered stretch occupies residues methionine 1–proline 21. At alanine 2 the chain carries N-acetylalanine.

Belongs to the Tom6 family. As to quaternary structure, forms part of the preprotein translocase complex of the outer mitochondrial membrane (TOM complex) which consists of at least 7 different proteins (TOMM5, TOMM6, TOMM7, TOMM20, TOMM22, TOMM40 and TOMM70).

It localises to the mitochondrion outer membrane. The protein is Mitochondrial import receptor subunit TOM6 homolog (Tomm6) of Mus musculus (Mouse).